Reading from the N-terminus, the 444-residue chain is Probable D-serine dehydratase (444 aa).

Lys-118 carries the post-translational modification N6-(pyridoxal phosphate)lysine.

This sequence belongs to the serine/threonine dehydratase family. DsdA subfamily. Pyridoxal 5'-phosphate is required as a cofactor.

The catalysed reaction is D-serine = pyruvate + NH4(+). The chain is Probable D-serine dehydratase from Acinetobacter baumannii (strain AB0057).